Consider the following 191-residue polypeptide: MSGKPVIHEFIVVEGRDDTTAINRSVIADTIETNGSALSQETIEKIRHAQELRGVIIFTDPDFPGEKIRKQIDSAVPGCKHAFINRQDALPKAGRGLGVEHASSANIREALENFHTSGAPTEKQFISKDILVHLGLLGGVGAKERREKIGNILKIGYTNGKQLQTRLESFAISEEQLVAACQKIMQEEENE.

Residues His8–Pro91 enclose the Toprim domain. 3 residues coordinate Mg(2+): Glu14, Asp60, and Asp62.

The protein belongs to the ribonuclease M5 family. Mg(2+) serves as cofactor.

It localises to the cytoplasm. It catalyses the reaction Endonucleolytic cleavage of RNA, removing 21 and 42 nucleotides, respectively, from the 5'- and 3'-termini of a 5S-rRNA precursor.. Required for correct processing of both the 5' and 3' ends of 5S rRNA precursor. Cleaves both sides of a double-stranded region yielding mature 5S rRNA in one step. The chain is Ribonuclease M5 from Listeria monocytogenes serovar 1/2a (strain ATCC BAA-679 / EGD-e).